We begin with the raw amino-acid sequence, 69 residues long: Small ribosomal subunit protein bS21 (69 aa).

The protein belongs to the bacterial ribosomal protein bS21 family.

The polypeptide is Small ribosomal subunit protein bS21 (Hyphomonas neptunium (strain ATCC 15444)).